The primary structure comprises 376 residues: 4-hydroxy-3-methylbut-2-enyl diphosphate reductase (376 aa).

Position 19 (Cys19) interacts with [4Fe-4S] cluster. The (2E)-4-hydroxy-3-methylbut-2-enyl diphosphate site is built by His48 and His99. The dimethylallyl diphosphate site is built by His48 and His99. The isopentenyl diphosphate site is built by His48 and His99. Cys121 contributes to the [4Fe-4S] cluster binding site. His149 serves as a coordination point for (2E)-4-hydroxy-3-methylbut-2-enyl diphosphate. His149 contacts dimethylallyl diphosphate. His149 lines the isopentenyl diphosphate pocket. Glu151 serves as the catalytic Proton donor. Thr208 lines the (2E)-4-hydroxy-3-methylbut-2-enyl diphosphate pocket. Cys236 provides a ligand contact to [4Fe-4S] cluster. (2E)-4-hydroxy-3-methylbut-2-enyl diphosphate-binding residues include Ser264, Asn266, and Ser307. Ser264, Asn266, and Ser307 together coordinate dimethylallyl diphosphate. Isopentenyl diphosphate-binding residues include Ser264, Asn266, and Ser307.

This sequence belongs to the IspH family. Requires [4Fe-4S] cluster as cofactor.

The enzyme catalyses isopentenyl diphosphate + 2 oxidized [2Fe-2S]-[ferredoxin] + H2O = (2E)-4-hydroxy-3-methylbut-2-enyl diphosphate + 2 reduced [2Fe-2S]-[ferredoxin] + 2 H(+). The catalysed reaction is dimethylallyl diphosphate + 2 oxidized [2Fe-2S]-[ferredoxin] + H2O = (2E)-4-hydroxy-3-methylbut-2-enyl diphosphate + 2 reduced [2Fe-2S]-[ferredoxin] + 2 H(+). It participates in isoprenoid biosynthesis; dimethylallyl diphosphate biosynthesis; dimethylallyl diphosphate from (2E)-4-hydroxy-3-methylbutenyl diphosphate: step 1/1. It functions in the pathway isoprenoid biosynthesis; isopentenyl diphosphate biosynthesis via DXP pathway; isopentenyl diphosphate from 1-deoxy-D-xylulose 5-phosphate: step 6/6. Functionally, catalyzes the conversion of 1-hydroxy-2-methyl-2-(E)-butenyl 4-diphosphate (HMBPP) into a mixture of isopentenyl diphosphate (IPP) and dimethylallyl diphosphate (DMAPP). Acts in the terminal step of the DOXP/MEP pathway for isoprenoid precursor biosynthesis. The chain is 4-hydroxy-3-methylbut-2-enyl diphosphate reductase from Treponema pallidum (strain Nichols).